Consider the following 327-residue polypeptide: GTPase Obg (327 aa).

The region spanning 1–159 (MQFIDQANII…WEVQLELKLL (159 aa)) is the Obg domain. One can recognise an OBG-type G domain in the interval 160–327 (AEVGIIGLPN…SLLSEVWKRI (168 aa)). Residues 166–173 (GLPNAGKS), 191–195 (FTTLI), 213–216 (DIPG), 280–283 (NKME), and 309–311 (SSS) each bind ATP. The Mg(2+) site is built by serine 173 and threonine 193.

This sequence belongs to the TRAFAC class OBG-HflX-like GTPase superfamily. OBG GTPase family. As to quaternary structure, monomer. It depends on Mg(2+) as a cofactor.

It localises to the cytoplasm. An essential GTPase which binds GTP, GDP and possibly (p)ppGpp with moderate affinity, with high nucleotide exchange rates and a fairly low GTP hydrolysis rate. Plays a role in control of the cell cycle, stress response, ribosome biogenesis and in those bacteria that undergo differentiation, in morphogenesis control. In Prochlorococcus marinus (strain MIT 9215), this protein is GTPase Obg.